The sequence spans 121 residues: Large ribosomal subunit protein P2 (121 aa).

The segment covering V72–P99 has biased composition (low complexity). Residues V72 to D121 form a disordered region.

Belongs to the eukaryotic ribosomal protein P1/P2 family. As to quaternary structure, P1 and P2 exist as dimers at the large ribosomal subunit. Post-translationally, phosphorylated.

Plays an important role in the elongation step of protein synthesis. The polypeptide is Large ribosomal subunit protein P2 (Taenia solium (Pork tapeworm)).